We begin with the raw amino-acid sequence, 437 residues long: Xylose isomerase (437 aa).

Residues His102 and Asp105 contribute to the active site. Mg(2+) is bound by residues Glu233, Glu269, His272, Asp297, Asp308, Asp310, and Asp340.

It belongs to the xylose isomerase family. In terms of assembly, homotetramer. The cofactor is Mg(2+).

Its subcellular location is the cytoplasm. The enzyme catalyses alpha-D-xylose = alpha-D-xylulofuranose. This Novosphingobium aromaticivorans (strain ATCC 700278 / DSM 12444 / CCUG 56034 / CIP 105152 / NBRC 16084 / F199) protein is Xylose isomerase.